Here is a 2364-residue protein sequence, read N- to C-terminus: Cytotoxin-L (2364 aa).

A four-helical bundle region spans residues methionine 1–leucine 91. In terms of domain architecture, GT44 spans lysine 96–leucine 468. Residues lysine 96–leucine 468 form a glucosyltransferase region region. UDP-alpha-D-glucose contacts are provided by residues isoleucine 101–isoleucine 103, asparagine 139, leucine 265–aspartate 270, and aspartate 286–aspartate 288. Positions 288, 515, and 518 each coordinate Mg(2+). Residue serine 518 to tryptophan 520 coordinates UDP-alpha-D-glucose. The autoprocessing region stretch occupies residues glycine 544–threonine 799. Positions 545 and 546 each coordinate Zn(2+). A Peptidase C80 domain is found at leucine 567–serine 774. Residues tyrosine 577, lysine 600, and lysine 647 each coordinate 1D-myo-inositol hexakisphosphate. Histidine 653 lines the Zn(2+) pocket. The active-site For protease activity is the histidine 653. The active-site Nucleophile; for protease activity is cysteine 698. Histidine 757 contacts Zn(2+). 1D-myo-inositol hexakisphosphate is bound by residues lysine 764, lysine 775, and lysine 792. Residues leucine 800 to proline 1500 are translocation region. Interaction with host SEMA6A and SEMA6B regions lie at residues cysteine 1433–glutamate 1438, aspartate 1466–tyrosine 1471, phenylalanine 1484–arginine 1495, asparagine 1504–lysine 1511, and tyrosine 1596–proline 1601. Cell wall-binding repeat units lie at residues glutamate 1813 to methionine 1832, valine 1833 to asparagine 1852, isoleucine 1854 to glycine 1873, serine 1876 to leucine 1895, phenylalanine 1926 to alanine 1945, alanine 1946 to glutamate 1965, leucine 1967 to methionine 1986, glutamine 1987 to methionine 2006, glutamine 2007 to arginine 2026, tyrosine 2057 to alanine 2076, valine 2077 to glutamate 2097, cysteine 2099 to arginine 2118, glutamine 2119 to isoleucine 2138, glutamate 2139 to valine 2158, glutamate 2209 to proline 2224, lysine 2227 to methionine 2249, arginine 2250 to methionine 2269, glutamine 2270 to methionine 2289, tyrosine 2320 to alanine 2339, and alanine 2340 to glutamate 2359. A receptor-binding (CROPS) region region spans residues glycine 1835–glutamate 2364.

Belongs to the clostridial glucosylating toxin (LCGT) family. As to quaternary structure, homomultimer; forms an inactive homomultimer at pH 8, which dissociates at pH 4, leading to cytotoxicity. Interacts with host SEMA6A; interaction promotes toxin entry into host cell. Interacts with host SEMA6B; interaction promotes toxin entry into host cell. Requires Zn(2+) as cofactor. The cofactor is Mn(2+). Mg(2+) is required as a cofactor. In terms of processing, undergoes autocatalytic cleavage to release the N-terminal part (Glucosyltransferase TcsL), which constitutes the active part of the toxin, in the host cytosol. 1D-myo-inositol hexakisphosphate-binding (InsP6) activates the peptidase C80 domain and promotes autoprocessing.

The protein resides in the secreted. It localises to the host endosome membrane. It is found in the host cytoplasm. Its subcellular location is the host cytosol. The protein localises to the host cell membrane. It catalyses the reaction L-threonyl-[protein] + UDP-alpha-D-glucose = 3-O-(alpha-D-glucosyl)-L-threonyl-[protein] + UDP + H(+). With respect to regulation, protease activity is activated upon binding to 1D-myo-inositol hexakisphosphate (InsP6), which induces conformational reorganization. In terms of biological role, precursor of a cytotoxin that targets the vascular endothelium, inducing an anti-inflammatory effect and resulting in lethal toxic shock syndrome. TcsL constitutes the main toxin that mediates the pathology of P.sordellii infection, an anaerobic Gram-positive bacterium found in soil and in the gastrointestinal and vaginal tracts of animals and humans; although the majority of carriers are asymptomatic, pathogenic P.sordellii infections arise rapidly and are highly lethal. This form constitutes the precursor of the toxin: it enters into host cells and mediates autoprocessing to release the active toxin (Glucosyltransferase TcsL) into the host cytosol. Targets vascular endothelium by binding to the semaphorin proteins SEMA6A and SEMA6B, and enters host cells via clathrin-mediated endocytosis. Once entered into host cells, acidification in the endosome promotes the membrane insertion of the translocation region and formation of a pore, leading to translocation of the GT44 and peptidase C80 domains across the endosomal membrane. This activates the peptidase C80 domain and autocatalytic processing, releasing the N-terminal part (Glucosyltransferase TcsL), which constitutes the active part of the toxin, in the cytosol. Functionally, active form of the toxin, which is released into the host cytosol following autoprocessing and inactivates small GTPases. Acts by mediating monoglucosylation of small GTPases of the Ras (H-Ras/HRAS, K-Ras/KRAS and N-Ras/NRAS) family in host cells at the conserved threonine residue located in the switch I region ('Thr-37/35'), using UDP-alpha-D-glucose as the sugar donor. Also able to catalyze monoglucosylation of some members of the Rho family (Rac1 and Rap2A), but with less efficiency than with Ras proteins. Monoglucosylation of host small GTPases completely prevents the recognition of the downstream effector, blocking the GTPases in their inactive form and leading to apoptosis. Induces an anti-inflammatory effect, mainly by inactivating Ras proteins which results in blockage of the cell cycle and killing of immune cells. The absence or moderate local inflammatory response allows C.sordellii spreading in deep tissues, production of toxin which is released in the general circulation and causes a toxic shock syndrome. The chain is Cytotoxin-L from Paraclostridium sordellii (strain ATCC 9714 / DSM 2141 / JCM 3814 / LMG 15708 / NCIMB 10717 / 211) (Clostridium sordellii).